We begin with the raw amino-acid sequence, 285 residues long: Glutamate racemase (285 aa).

Substrate contacts are provided by residues 28-29 (DS) and 60-61 (YG). The active-site Proton donor/acceptor is cysteine 92. A substrate-binding site is contributed by 93-94 (NT). Cysteine 204 serves as the catalytic Proton donor/acceptor. 205 to 206 (TH) lines the substrate pocket.

Belongs to the aspartate/glutamate racemases family.

It carries out the reaction L-glutamate = D-glutamate. The protein operates within cell wall biogenesis; peptidoglycan biosynthesis. Its function is as follows. Provides the (R)-glutamate required for cell wall biosynthesis. The polypeptide is Glutamate racemase (Escherichia coli (strain UTI89 / UPEC)).